The following is a 224-amino-acid chain: uncharacterized protein (224 aa).

S-adenosyl-L-methionine is bound by residues Gly-177, Ile-197, and Leu-206.

It belongs to the class IV-like SAM-binding methyltransferase superfamily. RNA methyltransferase TrmH family.

This is an uncharacterized protein from Archaeoglobus fulgidus (strain ATCC 49558 / DSM 4304 / JCM 9628 / NBRC 100126 / VC-16).